Reading from the N-terminus, the 291-residue chain is ATP synthase gamma chain (291 aa).

It belongs to the ATPase gamma chain family. F-type ATPases have 2 components, CF(1) - the catalytic core - and CF(0) - the membrane proton channel. CF(1) has five subunits: alpha(3), beta(3), gamma(1), delta(1), epsilon(1). CF(0) has three main subunits: a, b and c.

The protein resides in the cell inner membrane. In terms of biological role, produces ATP from ADP in the presence of a proton gradient across the membrane. The gamma chain is believed to be important in regulating ATPase activity and the flow of protons through the CF(0) complex. The polypeptide is ATP synthase gamma chain (Neisseria meningitidis serogroup B (strain ATCC BAA-335 / MC58)).